A 346-amino-acid chain; its full sequence is Glycerol-1-phosphate dehydrogenase [NAD(P)+] (346 aa).

NAD(+)-binding positions include 93 to 97 and 115 to 118; these read GTIID and TTAS. Residue D120 coordinates substrate. An NAD(+)-binding site is contributed by S124. Substrate is bound at residue D167. Zn(2+) is bound by residues D167 and H247. H251 is a substrate binding site. Position 263 (H263) interacts with Zn(2+).

This sequence belongs to the glycerol-1-phosphate dehydrogenase family. It depends on Zn(2+) as a cofactor.

Its subcellular location is the cytoplasm. The catalysed reaction is sn-glycerol 1-phosphate + NAD(+) = dihydroxyacetone phosphate + NADH + H(+). It catalyses the reaction sn-glycerol 1-phosphate + NADP(+) = dihydroxyacetone phosphate + NADPH + H(+). The protein operates within membrane lipid metabolism; glycerophospholipid metabolism. Its function is as follows. Catalyzes the NAD(P)H-dependent reduction of dihydroxyacetonephosphate (DHAP or glycerone phosphate) to glycerol 1-phosphate (G1P). The G1P thus generated is used as the glycerophosphate backbone of phospholipids in the cellular membranes of Archaea. This chain is Glycerol-1-phosphate dehydrogenase [NAD(P)+], found in Pyrococcus furiosus (strain ATCC 43587 / DSM 3638 / JCM 8422 / Vc1).